We begin with the raw amino-acid sequence, 140 residues long: Organic hydroperoxide resistance protein-like (140 aa).

It belongs to the OsmC/Ohr family.

The sequence is that of Organic hydroperoxide resistance protein-like from Staphylococcus aureus (strain MRSA252).